An 828-amino-acid chain; its full sequence is Periplasmic nitrate reductase (828 aa).

Positions 1–31 form a signal peptide, tat-type signal; it reads MKLSRRSFMKANAVAAAAAAAGLSVPGVARA. Positions 39-95 constitute a 4Fe-4S Mo/W bis-MGD-type domain; it reads IKWDKAPCRFCGTGCGVLVGTQQGRVVACQGDPDAPVNRGLNCIKGYFLPKIMYGKD. Residues Cys46, Cys49, Cys53, and Cys81 each coordinate [4Fe-4S] cluster. Mo-bis(molybdopterin guanine dinucleotide) contacts are provided by residues Lys83, Gln150, Asn175, Cys179, 212–219, 243–247, 262–264, Met372, Gln376, Asn482, 508–509, Lys531, Asp558, and 718–727; these read WGSNMAEM, STFQH, QSD, SD, and TGRVLEHWHT. Substrate is bound at residue Phe794. Asn802 and Lys819 together coordinate Mo-bis(molybdopterin guanine dinucleotide).

It belongs to the prokaryotic molybdopterin-containing oxidoreductase family. NasA/NapA/NarB subfamily. Component of the periplasmic nitrate reductase NapAB complex composed of NapA and NapB. [4Fe-4S] cluster is required as a cofactor. Requires Mo-bis(molybdopterin guanine dinucleotide) as cofactor. Predicted to be exported by the Tat system. The position of the signal peptide cleavage has not been experimentally proven.

It is found in the periplasm. The catalysed reaction is 2 Fe(II)-[cytochrome] + nitrate + 2 H(+) = 2 Fe(III)-[cytochrome] + nitrite + H2O. Its function is as follows. Catalytic subunit of the periplasmic nitrate reductase complex NapAB. Receives electrons from NapB and catalyzes the reduction of nitrate to nitrite. This chain is Periplasmic nitrate reductase, found in Salmonella paratyphi C (strain RKS4594).